We begin with the raw amino-acid sequence, 122 residues long: Small ribosomal subunit protein uS13 (122 aa).

Residues 94–122 form a disordered region; sequence RGLPVRGQRTKTNARQRKGPRPAIGGRKK.

Belongs to the universal ribosomal protein uS13 family. In terms of assembly, part of the 30S ribosomal subunit. Forms a loose heterodimer with protein S19. Forms two bridges to the 50S subunit in the 70S ribosome.

Located at the top of the head of the 30S subunit, it contacts several helices of the 16S rRNA. In the 70S ribosome it contacts the 23S rRNA (bridge B1a) and protein L5 of the 50S subunit (bridge B1b), connecting the 2 subunits; these bridges are implicated in subunit movement. Contacts the tRNAs in the A and P-sites. This Rubrobacter xylanophilus (strain DSM 9941 / JCM 11954 / NBRC 16129 / PRD-1) protein is Small ribosomal subunit protein uS13.